A 200-amino-acid chain; its full sequence is Recombination protein RecR (200 aa).

The C4-type zinc-finger motif lies at 57–72 (CRQCRTLTEEELCPQC). Positions 80 to 175 (TLLCVVEGPM…ITSRIAHGVP (96 aa)) constitute a Toprim domain.

It belongs to the RecR family.

Its function is as follows. May play a role in DNA repair. It seems to be involved in an RecBC-independent recombinational process of DNA repair. It may act with RecF and RecO. This Pseudomonas fluorescens (strain SBW25) protein is Recombination protein RecR.